A 239-amino-acid polypeptide reads, in one-letter code: Sugar fermentation stimulation protein homolog (239 aa).

It belongs to the SfsA family.

This chain is Sugar fermentation stimulation protein homolog, found in Methylobacterium sp. (strain 4-46).